The sequence spans 116 residues: Large ribosomal subunit protein bL20 (116 aa).

Belongs to the bacterial ribosomal protein bL20 family.

Binds directly to 23S ribosomal RNA and is necessary for the in vitro assembly process of the 50S ribosomal subunit. It is not involved in the protein synthesizing functions of that subunit. The protein is Large ribosomal subunit protein bL20 of Acaryochloris marina (strain MBIC 11017).